A 320-amino-acid polypeptide reads, in one-letter code: Putative sporulation hydrolase CotR (320 aa).

The region spanning 7 to 182 (MTFDGGGTLG…VATNPSTASI (176 aa)) is the PNPLA domain. Positions 11–16 (GGGTLG) match the GXGXXG motif. The GXSXG signature appears at 42 to 46 (GNSIG). S44 serves as the catalytic Nucleophile. D169 (proton acceptor) is an active-site residue.

Its subcellular location is the spore coat. This is Putative sporulation hydrolase CotR (cotR) from Bacillus subtilis (strain 168).